Here is a 215-residue protein sequence, read N- to C-terminus: Adenylate kinase (215 aa).

10–15 (GAGKGT) is an ATP binding site. The segment at 30-59 (STGDMLRAAVKAETELGLKAKSVMDSGGLV) is NMP. AMP is bound by residues threonine 31, arginine 36, 57–59 (GLV), 85–88 (GFPR), and glutamine 92. Residues 122-159 (GRRVHEGSGRIYHTIFNPPKVECIDDVTGEPLLQRKDD) form an LID region. ATP contacts are provided by residues arginine 123 and 132 to 133 (IY). AMP is bound by residues arginine 156 and arginine 167. Glycine 201 contributes to the ATP binding site.

Belongs to the adenylate kinase family. In terms of assembly, monomer.

The protein resides in the cytoplasm. It carries out the reaction AMP + ATP = 2 ADP. The protein operates within purine metabolism; AMP biosynthesis via salvage pathway; AMP from ADP: step 1/1. Catalyzes the reversible transfer of the terminal phosphate group between ATP and AMP. Plays an important role in cellular energy homeostasis and in adenine nucleotide metabolism. In Pseudomonas savastanoi pv. phaseolicola (strain 1448A / Race 6) (Pseudomonas syringae pv. phaseolicola (strain 1448A / Race 6)), this protein is Adenylate kinase.